Consider the following 1222-residue polypeptide: ATP-dependent helicase/nuclease subunit A (1222 aa).

In terms of domain architecture, UvrD-like helicase ATP-binding spans Gln39–Gln495. Ala60–Thr67 lines the ATP pocket. The region spanning Gln524–Gly810 is the UvrD-like helicase C-terminal domain.

The protein belongs to the helicase family. AddA subfamily. In terms of assembly, heterodimer of AddA and AddB/RexB. Mg(2+) is required as a cofactor.

It carries out the reaction Couples ATP hydrolysis with the unwinding of duplex DNA by translocating in the 3'-5' direction.. It catalyses the reaction ATP + H2O = ADP + phosphate + H(+). Functionally, the heterodimer acts as both an ATP-dependent DNA helicase and an ATP-dependent, dual-direction single-stranded exonuclease. Recognizes the chi site generating a DNA molecule suitable for the initiation of homologous recombination. The AddA nuclease domain is required for chi fragment generation; this subunit has the helicase and 3' -&gt; 5' nuclease activities. The sequence is that of ATP-dependent helicase/nuclease subunit A from Streptococcus pyogenes serotype M12 (strain MGAS2096).